A 571-amino-acid chain; its full sequence is Urease subunit alpha (571 aa).

A Urease domain is found at G134–F571. Ni(2+)-binding residues include H139, H141, and K222. At K222 the chain carries N6-carboxylysine. H224 is a substrate binding site. 2 residues coordinate Ni(2+): H251 and H277. Residue H325 is the Proton donor of the active site. D365 lines the Ni(2+) pocket.

It belongs to the metallo-dependent hydrolases superfamily. Urease alpha subunit family. In terms of assembly, heterotrimer of UreA (gamma), UreB (beta) and UreC (alpha) subunits. Three heterotrimers associate to form the active enzyme. It depends on Ni cation as a cofactor. Post-translationally, carboxylation allows a single lysine to coordinate two nickel ions.

The protein resides in the cytoplasm. It carries out the reaction urea + 2 H2O + H(+) = hydrogencarbonate + 2 NH4(+). Its pathway is nitrogen metabolism; urea degradation; CO(2) and NH(3) from urea (urease route): step 1/1. The polypeptide is Urease subunit alpha (Bordetella parapertussis (strain 12822 / ATCC BAA-587 / NCTC 13253)).